Here is a 263-residue protein sequence, read N- to C-terminus: 4-hydroxy-tetrahydrodipicolinate reductase (263 aa).

NAD(+) contacts are provided by residues 7-12 and aspartate 33; that span reads GASGRM. Arginine 34 lines the NADP(+) pocket. Residues 96–98 and 120–123 contribute to the NAD(+) site; these read GTT and APNM. Residue histidine 153 is the Proton donor/acceptor of the active site. A (S)-2,3,4,5-tetrahydrodipicolinate-binding site is contributed by histidine 154. Lysine 157 (proton donor) is an active-site residue. 163–164 is a (S)-2,3,4,5-tetrahydrodipicolinate binding site; the sequence is GT.

It belongs to the DapB family.

The protein resides in the cytoplasm. It carries out the reaction (S)-2,3,4,5-tetrahydrodipicolinate + NAD(+) + H2O = (2S,4S)-4-hydroxy-2,3,4,5-tetrahydrodipicolinate + NADH + H(+). The catalysed reaction is (S)-2,3,4,5-tetrahydrodipicolinate + NADP(+) + H2O = (2S,4S)-4-hydroxy-2,3,4,5-tetrahydrodipicolinate + NADPH + H(+). Its pathway is amino-acid biosynthesis; L-lysine biosynthesis via DAP pathway; (S)-tetrahydrodipicolinate from L-aspartate: step 4/4. Its function is as follows. Catalyzes the conversion of 4-hydroxy-tetrahydrodipicolinate (HTPA) to tetrahydrodipicolinate. This chain is 4-hydroxy-tetrahydrodipicolinate reductase, found in Ralstonia pickettii (strain 12J).